The sequence spans 216 residues: Redox-sensing transcriptional repressor Rex (216 aa).

The H-T-H motif DNA-binding region spans 20–59 (QYYRLFKSLVEENVTRTNSQLISEKIGVDAATIRRDFSLF). An NAD(+)-binding site is contributed by 94–99 (GVGNLG).

Belongs to the transcriptional regulatory Rex family. Homodimer.

The protein localises to the cytoplasm. Functionally, modulates transcription in response to changes in cellular NADH/NAD(+) redox state. The sequence is that of Redox-sensing transcriptional repressor Rex from Lactococcus lactis subsp. cremoris (strain SK11).